The chain runs to 246 residues: Envelope glycoprotein L (246 aa).

The first 19 residues, 1-19 (MKTNIFFIFLISILNQIYA), serve as a signal peptide directing secretion. One can recognise a gL betaherpesvirus-type domain in the interval 29–235 (LEQECIKNIL…EKYNEVLPFR (207 aa)). An intrachain disulfide couples C134 to C139.

Belongs to the herpesviridae glycoprotein L (gL) family. Betaherpesvirinae gL subfamily. In terms of assembly, interacts with glycoprotein H (gH); this interaction is necessary for the correct processing and cell surface expression of gH.

The protein resides in the virion membrane. Its subcellular location is the host cell membrane. It localises to the host Golgi apparatus. It is found in the host trans-Golgi network. The heterodimer glycoprotein H-glycoprotein L is required for the fusion of viral and plasma membranes leading to virus entry into the host cell. Acts as a functional inhibitor of gH and maintains gH in an inhibited form. Upon binding to host integrins, gL dissociates from gH leading to activation of the viral fusion glycoproteins gB and gH. The protein is Envelope glycoprotein L of Homo sapiens (Human).